The sequence spans 397 residues: Acetate kinase (397 aa).

Asn7 contacts Mg(2+). Residue Lys14 coordinates ATP. Arg91 contacts substrate. The active-site Proton donor/acceptor is the Asp148. Residues His208–Gly212, Asp283–Arg285, and Gly331–Asn335 each bind ATP. Glu384 serves as a coordination point for Mg(2+).

It belongs to the acetokinase family. Homodimer. Mg(2+) serves as cofactor. It depends on Mn(2+) as a cofactor.

It localises to the cytoplasm. It carries out the reaction acetate + ATP = acetyl phosphate + ADP. It participates in metabolic intermediate biosynthesis; acetyl-CoA biosynthesis; acetyl-CoA from acetate: step 1/2. Catalyzes the formation of acetyl phosphate from acetate and ATP. Can also catalyze the reverse reaction. This is Acetate kinase from Azobacteroides pseudotrichonymphae genomovar. CFP2.